The following is a 601-amino-acid chain: HMG domain-containing protein 4 (601 aa).

Lys-8 participates in a covalent cross-link: Glycyl lysine isopeptide (Lys-Gly) (interchain with G-Cter in SUMO2). Disordered regions lie at residues 51 to 410 and 473 to 514; these read VRNS…KKKN and TTVK…ASPA. The segment covering 82–93 has biased composition (low complexity); sequence DYYYGDISSLES. A Phosphoserine modification is found at Ser-102. Residue Lys-191 forms a Glycyl lysine isopeptide (Lys-Gly) (interchain with G-Cter in SUMO2) linkage. Residue Ser-197 is modified to Phosphoserine. Composition is skewed to polar residues over residues 212 to 221 and 270 to 282; these read QYPSQQATVK and DASQ…SANL. A compositionally biased stretch (basic residues) spans 316–344; it reads IKKKKKSKKSKKKKDKEKHKEKRHSKSKR. Positions 394–404 are enriched in basic and acidic residues; that stretch reads EEKDKERERGE. The HMG box DNA-binding region spans 407–475; it reads KKKNMSAYQV…KQNKAEATTV (69 aa). Ser-497, Ser-502, and Ser-512 each carry phosphoserine.

Its subcellular location is the nucleus. Negatively regulates Wnt/beta-catenin signaling during development. The polypeptide is HMG domain-containing protein 4 (HMGXB4) (Homo sapiens (Human)).